The chain runs to 118 residues: Large ribosomal subunit protein bL20 (118 aa).

It belongs to the bacterial ribosomal protein bL20 family.

Functionally, binds directly to 23S ribosomal RNA and is necessary for the in vitro assembly process of the 50S ribosomal subunit. It is not involved in the protein synthesizing functions of that subunit. This is Large ribosomal subunit protein bL20 from Desulfotalea psychrophila (strain LSv54 / DSM 12343).